The following is a 522-amino-acid chain: Cytochrome P450 714C2 (522 aa).

Residues 1-11 (MELFSSQQWLA) lie on the Lumenal side of the membrane. The helical; Signal-anchor for type III membrane protein transmembrane segment at 12–32 (LLPPIILCILLFSYVYIILWL) threads the bilayer. Over 33 to 522 (RPERLRQKLR…KGVPLIFREL (490 aa)) the chain is Cytoplasmic. C470 is a binding site for heme.

The protein belongs to the cytochrome P450 family. Heme is required as a cofactor.

The protein resides in the membrane. Probably not involved in gibberellin metabolism since over-expression of CYP714C2 in a heterologous system does not induce semi-dwarfism. The chain is Cytochrome P450 714C2 (CYP714C2) from Oryza sativa subsp. japonica (Rice).